The primary structure comprises 84 residues: Venom protein SynTx (84 aa).

Positions 1–19 are cleaved as a signal peptide; it reads TLLLTLVVVTIVCLDLGYT. 4 cysteine pairs are disulfide-bonded: C22-C43, C36-C61, C65-C76, and C77-C82.

It belongs to the three-finger toxin family. Short-chain subfamily. Aminergic toxin sub-subfamily. In terms of assembly, homodimer; disulfide-linked. Expressed by the venom gland.

The protein resides in the secreted. In terms of biological role, this protein shows a synergetic toxic effect in that it enhances the toxicity of other toxins. The sequence is that of Venom protein SynTx from Dendroaspis jamesoni jamesoni (Jameson's mamba).